Here is a 271-residue protein sequence, read N- to C-terminus: Multivesicular body subunit 12A (271 aa).

The region spanning 7 to 149 (SAPLAGLVWS…GFAIWCKKSK (143 aa)) is the MABP domain. Thr128 carries the phosphothreonine modification. Residues 149-192 (KAPRPVPKPRTLSQDMRGLSLDPPKEPSKGSHPERTLSRLGSRA) are disordered. Residues 153 to 158 (PVPKPR) carry the SH3-binding motif. Phosphoserine occurs at positions 161 and 168. Residues 171–185 (PPKEPSKGSHPERTL) show a composition bias toward basic and acidic residues. The interaction with TSG101, VPS37B and VPS28 stretch occupies residues 190 to 271 (SRASTLRRTD…AAARLPPSVS (82 aa)). Residues Ser193 and Ser200 each carry the phosphoserine modification. Tyr202 is subject to Phosphotyrosine. At Ser205 the chain carries Phosphoserine. Residues 213 to 263 (MDGVPFTLHPRFEGKSCGPLNLSAFGDLTIKSLADIEKEYNYGFVVEKTAA) form the UMA domain.

This sequence belongs to the MVB12 family. Component of the ESCRT-I complex (endosomal sorting complex required for transport I) which consists of TSG101, VPS28, a VPS37 protein (VPS37A to -D) and MVB12A or MVB12B in a 1:1:1:1 stoichiometry. Interacts with CD2AP and CIN85/SH3KBP1. Interacts with CD2AP (via one of the SH3 domains). Interacts with TSG101; the association appears to be mediated by the TSG101-VPS37 binary subcomplex. Interacts with VPS28. Interacts with VPS37B; the association appears to be mediated by the TSG101-VPS37 binary subcomplex. Interacts with VPS37C; the association appears to be mediated by the TSG101-VPS37 binary subcomplex. Interacts with VPS37D; the association appears to be mediated by the TSG101-VPS37 binary subcomplex. Interacts with CEP55. Post-translationally, phosphorylated on Tyr-202 upon EGF stimulation. Phosphorylation is required for interaction with CD2AP and CIN85/SH3KBP1.

The protein resides in the cytoplasm. The protein localises to the cytoskeleton. It is found in the nucleus. Its subcellular location is the endosome. It localises to the microtubule organizing center. The protein resides in the centrosome. The protein localises to the late endosome membrane. Functionally, component of the ESCRT-I complex, a regulator of vesicular trafficking process. Required for the sorting of endocytic ubiquitinated cargos into multivesicular bodies. May be involved in the ligand-mediated internalization and down-regulation of EGF receptor. This is Multivesicular body subunit 12A (Mvb12a) from Mus musculus (Mouse).